The sequence spans 117 residues: Protein OPG035 (117 aa).

It belongs to the poxviridae OPG035 family.

Its function is as follows. Bcl-2-like protein which contributes to virulence by preventing host NF-kappa-B activation in response to pro-inflammatory stimuli such as TNF-alpha or IL1B. The polypeptide is Protein OPG035 (OPG035) (Monkeypox virus).